The following is a 240-amino-acid chain: 1-(5-phosphoribosyl)-5-[(5-phosphoribosylamino)methylideneamino] imidazole-4-carboxamide isomerase 1 (240 aa).

The active-site Proton acceptor is D8. D129 serves as the catalytic Proton donor.

Belongs to the HisA/HisF family.

It is found in the cytoplasm. The enzyme catalyses 1-(5-phospho-beta-D-ribosyl)-5-[(5-phospho-beta-D-ribosylamino)methylideneamino]imidazole-4-carboxamide = 5-[(5-phospho-1-deoxy-D-ribulos-1-ylimino)methylamino]-1-(5-phospho-beta-D-ribosyl)imidazole-4-carboxamide. The protein operates within amino-acid biosynthesis; L-histidine biosynthesis; L-histidine from 5-phospho-alpha-D-ribose 1-diphosphate: step 4/9. The sequence is that of 1-(5-phosphoribosyl)-5-[(5-phosphoribosylamino)methylideneamino] imidazole-4-carboxamide isomerase 1 from Ruegeria pomeroyi (strain ATCC 700808 / DSM 15171 / DSS-3) (Silicibacter pomeroyi).